Reading from the N-terminus, the 426-residue chain is Tyrosine--tRNA ligase (426 aa).

Tyr-38 provides a ligand contact to L-tyrosine. The 'HIGH' region signature appears at 43 to 52; the sequence is PTADSLHIGS. L-tyrosine is bound by residues Tyr-176 and Gln-180. A 'KMSKS' region motif is present at residues 236–240; that stretch reads KFGKT. Residue Lys-239 participates in ATP binding. The S4 RNA-binding domain maps to 359 to 426; sequence QTIVEVLTQS…KKLFNLYIWK (68 aa).

This sequence belongs to the class-I aminoacyl-tRNA synthetase family. TyrS type 1 subfamily. In terms of assembly, homodimer.

The protein resides in the cytoplasm. It carries out the reaction tRNA(Tyr) + L-tyrosine + ATP = L-tyrosyl-tRNA(Tyr) + AMP + diphosphate + H(+). Its function is as follows. Catalyzes the attachment of tyrosine to tRNA(Tyr) in a two-step reaction: tyrosine is first activated by ATP to form Tyr-AMP and then transferred to the acceptor end of tRNA(Tyr). This chain is Tyrosine--tRNA ligase, found in Aliivibrio fischeri (strain ATCC 700601 / ES114) (Vibrio fischeri).